The primary structure comprises 320 residues: Olfactory receptor 52N1 (320 aa).

Topologically, residues 1-27 (MSFLNGTSLTPASFILNGIPGLEDVHL) are extracellular. Asparagine 5 is a glycosylation site (N-linked (GlcNAc...) asparagine). The chain crosses the membrane as a helical span at residues 28-48 (WISFPLCTMYSIAITGNFGLM). The Cytoplasmic portion of the chain corresponds to 49–56 (YLIYCDEA). A helical membrane pass occupies residues 57-77 (LHRPMYVFLALLSFTDVLMCT). Topologically, residues 78–101 (STLPNTLFILWFNLKEIDFKACLA) are extracellular. Cysteine 99 and cysteine 191 are disulfide-bonded. A helical transmembrane segment spans residues 102–122 (QMFFVHTFTGMESGVLMLMAL). Over 123-141 (DHCVAICFPLRYATILTNS) the chain is Cytoplasmic. The chain crosses the membrane as a helical span at residues 142–162 (VIAKAGFLTFLRGVMLVIPST). Residues 163–198 (FLTKRLPYCKGNVIPHTYCDHMSVAKISCGNVRVNA) are Extracellular-facing. The helical transmembrane segment at 199 to 219 (IYGLIVALLIGGFDILCITIS) threads the bilayer. The Cytoplasmic segment spans residues 220-239 (YTMILQAVVSLSSADARQKA). A helical membrane pass occupies residues 240 to 260 (FSTCTAHFCAIVLTYVPAFFT). The Extracellular portion of the chain corresponds to 261-276 (FFTHHFGGHTIPLHIH). A helical membrane pass occupies residues 277–297 (IIMANLYLLMPPTMNPIVYGV). Residues 298–320 (KTRQVRESVIRFFLKGKDNSHNF) lie on the Cytoplasmic side of the membrane.

Belongs to the G-protein coupled receptor 1 family.

The protein localises to the cell membrane. Odorant receptor. The chain is Olfactory receptor 52N1 (OR52N1) from Homo sapiens (Human).